A 500-amino-acid chain; its full sequence is Na(+)/H(+) antiporter NhaB (500 aa).

A run of 12 helical transmembrane segments spans residues 28-50 (FLLL…VLVG), 68-88 (GGLL…ALYA), 98-118 (LLLM…LLLF), 121-141 (LLLG…LAAL), 145-165 (FLDA…FFAV), 205-225 (LLMH…VGEP), 244-264 (QVAP…VLLE), 311-331 (VLIV…LLVI), 350-370 (FQEA…VAVI), 394-414 (MLFI…VATI), 449-469 (VATP…IAPL), and 477-497 (MVWM…WAVS).

It belongs to the NhaB Na(+)/H(+) (TC 2.A.34) antiporter family.

Its subcellular location is the cell inner membrane. The enzyme catalyses 2 Na(+)(in) + 3 H(+)(out) = 2 Na(+)(out) + 3 H(+)(in). In terms of biological role, na(+)/H(+) antiporter that extrudes sodium in exchange for external protons. The polypeptide is Na(+)/H(+) antiporter NhaB (Pseudomonas aeruginosa (strain LESB58)).